The sequence spans 324 residues: Type II restriction enzyme AplI (324 aa).

It belongs to the BsuBI/PstI type II restriction endonuclease family. Requires Mg(2+) as cofactor.

The enzyme catalyses Endonucleolytic cleavage of DNA to give specific double-stranded fragments with terminal 5'-phosphates.. With respect to regulation, activated by K(+) and Na(+) ions, whereas NH(4)(+) ions appear to inhibit endonuclease activity. Functionally, a P subtype restriction enzyme that recognizes the double-stranded sequence 5'-CTGCAG-3' and cleaves after A-5. This Arthrospira platensis (strain NIES-39 / UTEX 3086 / IAM M-135) (Spirulina platensis) protein is Type II restriction enzyme AplI (aplIR).